The primary structure comprises 394 residues: Phosphopentomutase (394 aa).

Residues Asp15, Asp288, His293, Asp329, His330, and His341 each coordinate Mn(2+).

This sequence belongs to the phosphopentomutase family. The cofactor is Mn(2+).

The protein localises to the cytoplasm. It catalyses the reaction 2-deoxy-alpha-D-ribose 1-phosphate = 2-deoxy-D-ribose 5-phosphate. It carries out the reaction alpha-D-ribose 1-phosphate = D-ribose 5-phosphate. The protein operates within carbohydrate degradation; 2-deoxy-D-ribose 1-phosphate degradation; D-glyceraldehyde 3-phosphate and acetaldehyde from 2-deoxy-alpha-D-ribose 1-phosphate: step 1/2. In terms of biological role, isomerase that catalyzes the conversion of deoxy-ribose 1-phosphate (dRib-1-P) and ribose 1-phosphate (Rib-1-P) to deoxy-ribose 5-phosphate (dRib-5-P) and ribose 5-phosphate (Rib-5-P), respectively. This chain is Phosphopentomutase (drm), found in Bacillus subtilis (strain 168).